The sequence spans 173 residues: 3-hydroxydecanoyl-[acyl-carrier-protein] dehydratase (173 aa).

The active site involves His-71.

The protein belongs to the thioester dehydratase family. FabA subfamily. In terms of assembly, homodimer.

The protein localises to the cytoplasm. It carries out the reaction a (3R)-hydroxyacyl-[ACP] = a (2E)-enoyl-[ACP] + H2O. The enzyme catalyses (3R)-hydroxydecanoyl-[ACP] = (2E)-decenoyl-[ACP] + H2O. The catalysed reaction is (2E)-decenoyl-[ACP] = (3Z)-decenoyl-[ACP]. It functions in the pathway lipid metabolism; fatty acid biosynthesis. Necessary for the introduction of cis unsaturation into fatty acids. Catalyzes the dehydration of (3R)-3-hydroxydecanoyl-ACP to E-(2)-decenoyl-ACP and then its isomerization to Z-(3)-decenoyl-ACP. Can catalyze the dehydratase reaction for beta-hydroxyacyl-ACPs with saturated chain lengths up to 16:0, being most active on intermediate chain length. This Baumannia cicadellinicola subsp. Homalodisca coagulata protein is 3-hydroxydecanoyl-[acyl-carrier-protein] dehydratase.